The sequence spans 186 residues: Ribosome-recycling factor (186 aa).

The protein belongs to the RRF family.

It is found in the cytoplasm. Responsible for the release of ribosomes from messenger RNA at the termination of protein biosynthesis. May increase the efficiency of translation by recycling ribosomes from one round of translation to another. This is Ribosome-recycling factor from Bordetella parapertussis (strain 12822 / ATCC BAA-587 / NCTC 13253).